A 262-amino-acid chain; its full sequence is 1,2-epoxyphenylacetyl-CoA isomerase (262 aa).

It belongs to the enoyl-CoA hydratase/isomerase family.

The enzyme catalyses 2-(1,2-epoxy-1,2-dihydrophenyl)acetyl-CoA = 2-oxepin-2(3H)-ylideneacetyl-CoA. It functions in the pathway aromatic compound metabolism; phenylacetate degradation. Its function is as follows. Catalyzes the reversible conversion of the epoxide to 2-oxepin-2(3H)-ylideneacetyl-CoA (oxepin-CoA). This Escherichia coli (strain K12) protein is 1,2-epoxyphenylacetyl-CoA isomerase (paaG).